The chain runs to 320 residues: Thymidine kinase (320 aa).

An ATP-binding site is contributed by 10 to 17 (GAYDTGKS). Glutamate 33 serves as the catalytic Proton acceptor. Substrate contacts are provided by tyrosine 51 and glutamine 75. An ATP-binding site is contributed by arginine 162. A substrate-binding site is contributed by arginine 168.

It belongs to the herpesviridae thymidine kinase family. Homodimer.

It carries out the reaction thymidine + ATP = dTMP + ADP + H(+). Its function is as follows. Catalyzes the transfer of the gamma-phospho group of ATP to thymidine to generate dTMP in the salvage pathway of pyrimidine synthesis. The dTMP serves as a substrate for DNA polymerase during viral DNA replication. Allows the virus to be reactivated and to grow in non-proliferative cells lacking a high concentration of phosphorylated nucleic acid precursors. The polypeptide is Thymidine kinase (Suid herpesvirus 1 (strain NIA-3) (SuHV-1)).